The primary structure comprises 438 residues: Plasmalemma vesicle-associated protein (438 aa).

Residues 1-26 (MGLSMDRSPYSRTGDRDRGCWYYLRY) are Cytoplasmic-facing. Residues 27-47 (FFLFVSLIQFLIILGLVLFMI) traverse the membrane as a helical; Signal-anchor for type II membrane protein segment. The Extracellular portion of the chain corresponds to 48-438 (YGNVHATTES…LVNPAVPPSG (391 aa)). N-linked (GlcNAc...) asparagine glycosylation is found at Asn-82, Asn-88, Asn-112, and Asn-150. The stretch at 289-383 (AGIERVTREN…TEVDVRISAL (95 aa)) forms a coiled coil. Residues 393–438 (PAIQPRLPGPPPNPPPIDPASLEEFKKRILESQRPPLVNPAVPPSG) form a disordered region. 2 stretches are compositionally biased toward pro residues: residues 399-410 (LPGPPPNPPPID) and 429-438 (LVNPAVPPSG).

Homodimer. Expressed in lung (alveolar endothelial and bronchial epithelial cells), kidney (endothelium of peritubular capillaries), spleen, liver, adrenal (endothelial cells of the zona reticularis of the cortex and chromaffin cells in the medulla), pancreas (islets of Langerhans), testis (germ cells, interstitial cells in neonatal testis and spermatids), ovary (stromal endothelial, thecal layer of developing follicles, luteal cells within the corpus luteum), intestine (endothelium of capillaries of the intestinal villi) and pituitary (pituicyte cells in the neural lobe) (at protein level). Expressed in lung, kidney, spleen, liver, adrenal, testis, heart, muscle, pituitary, thyroid and ovary.

It is found in the cell membrane. It localises to the membrane. The protein localises to the caveola. Its subcellular location is the cytoplasm. The protein resides in the perinuclear region. Functionally, endothelial cell-specific membrane protein involved in the formation of the diaphragms that bridge endothelial fenestrae. It is also required for the formation of stomata of caveolae and transendothelial channels. Functions in microvascular permeability, endothelial fenestrae contributing to the passage of water and solutes and regulating transcellular versus paracellular flow in different organs. Plays a specific role in embryonic development. The polypeptide is Plasmalemma vesicle-associated protein (Plvap) (Rattus norvegicus (Rat)).